The primary structure comprises 264 residues: Thymidylate synthase (264 aa).

DUMP is bound at residue arginine 21. Histidine 51 provides a ligand contact to (6R)-5,10-methylene-5,6,7,8-tetrahydrofolate. Position 126 to 127 (126 to 127) interacts with dUMP; it reads RR. Cysteine 146 serves as the catalytic Nucleophile. DUMP is bound by residues 166–169, asparagine 177, and 207–209; these read RSAD and HLY. Aspartate 169 contacts (6R)-5,10-methylene-5,6,7,8-tetrahydrofolate. A (6R)-5,10-methylene-5,6,7,8-tetrahydrofolate-binding site is contributed by alanine 263.

This sequence belongs to the thymidylate synthase family. Bacterial-type ThyA subfamily. As to quaternary structure, homodimer.

The protein resides in the cytoplasm. The catalysed reaction is dUMP + (6R)-5,10-methylene-5,6,7,8-tetrahydrofolate = 7,8-dihydrofolate + dTMP. Its pathway is pyrimidine metabolism; dTTP biosynthesis. Its function is as follows. Catalyzes the reductive methylation of 2'-deoxyuridine-5'-monophosphate (dUMP) to 2'-deoxythymidine-5'-monophosphate (dTMP) while utilizing 5,10-methylenetetrahydrofolate (mTHF) as the methyl donor and reductant in the reaction, yielding dihydrofolate (DHF) as a by-product. This enzymatic reaction provides an intracellular de novo source of dTMP, an essential precursor for DNA biosynthesis. The chain is Thymidylate synthase from Bartonella henselae (strain ATCC 49882 / DSM 28221 / CCUG 30454 / Houston 1) (Rochalimaea henselae).